A 159-amino-acid polypeptide reads, in one-letter code: SsrA-binding protein (159 aa).

Belongs to the SmpB family.

The protein resides in the cytoplasm. Its function is as follows. Required for rescue of stalled ribosomes mediated by trans-translation. Binds to transfer-messenger RNA (tmRNA), required for stable association of tmRNA with ribosomes. tmRNA and SmpB together mimic tRNA shape, replacing the anticodon stem-loop with SmpB. tmRNA is encoded by the ssrA gene; the 2 termini fold to resemble tRNA(Ala) and it encodes a 'tag peptide', a short internal open reading frame. During trans-translation Ala-aminoacylated tmRNA acts like a tRNA, entering the A-site of stalled ribosomes, displacing the stalled mRNA. The ribosome then switches to translate the ORF on the tmRNA; the nascent peptide is terminated with the 'tag peptide' encoded by the tmRNA and targeted for degradation. The ribosome is freed to recommence translation, which seems to be the essential function of trans-translation. In Dichelobacter nodosus (strain VCS1703A), this protein is SsrA-binding protein.